A 400-amino-acid chain; its full sequence is Acetate kinase (400 aa).

Residue Asn-7 coordinates Mg(2+). Lys-14 is an ATP binding site. Residue Arg-91 coordinates substrate. The active-site Proton donor/acceptor is the Asp-148. ATP-binding positions include 208-212 (HLGNG), 284-286 (DMR), and 332-336 (GVGEN). Glu-384 serves as a coordination point for Mg(2+).

It belongs to the acetokinase family. As to quaternary structure, homodimer. It depends on Mg(2+) as a cofactor. Mn(2+) is required as a cofactor.

It localises to the cytoplasm. It carries out the reaction acetate + ATP = acetyl phosphate + ADP. The protein operates within metabolic intermediate biosynthesis; acetyl-CoA biosynthesis; acetyl-CoA from acetate: step 1/2. In terms of biological role, catalyzes the formation of acetyl phosphate from acetate and ATP. Can also catalyze the reverse reaction. The protein is Acetate kinase of Coprothermobacter proteolyticus (strain ATCC 35245 / DSM 5265 / OCM 4 / BT).